The sequence spans 328 residues: Arabinose 5-phosphate isomerase KdsD (328 aa).

In terms of domain architecture, SIS spans 41 to 184; the sequence is ACEKMFNCTG…AVALLKARGF (144 aa). Residues 75–76, His82, His88, 114–123, and 148–150 each bind substrate; these read GT, ALIPVLKRLH, and KVP. His82 provides a ligand contact to Zn(2+). The CBS 1 domain maps to 210–268; it reads MHTGDEIPHVNKHATLRDALLEITRKNLGMTVICDESMKIDGIFTDGDLRRVFDMGGDM. Glu275 lines the substrate pocket. The region spanning 277-328 is the CBS 2 domain; sequence MTPGGIRVRPGILAVDALNLMQSRHITSVLVADGDQLLGVLHMHDLLRAGVV.

The protein belongs to the SIS family. GutQ/KpsF subfamily. As to quaternary structure, homotetramer.

It catalyses the reaction D-arabinose 5-phosphate = D-ribulose 5-phosphate. It functions in the pathway carbohydrate biosynthesis; 3-deoxy-D-manno-octulosonate biosynthesis; 3-deoxy-D-manno-octulosonate from D-ribulose 5-phosphate: step 1/3. The protein operates within bacterial outer membrane biogenesis; lipopolysaccharide biosynthesis. Functionally, involved in the biosynthesis of 3-deoxy-D-manno-octulosonate (KDO), a unique 8-carbon sugar component of lipopolysaccharides (LPSs). Catalyzes the reversible aldol-ketol isomerization between D-ribulose 5-phosphate (Ru5P) and D-arabinose 5-phosphate (A5P). The protein is Arabinose 5-phosphate isomerase KdsD (kdsD) of Salmonella typhimurium (strain LT2 / SGSC1412 / ATCC 700720).